Here is a 131-residue protein sequence, read N- to C-terminus: Small ribosomal subunit protein uS8 (131 aa).

The disordered stretch occupies residues 1-27 (MSMTDPVADMLTRIRNGQRASKNEVSM).

The protein belongs to the universal ribosomal protein uS8 family. As to quaternary structure, part of the 30S ribosomal subunit. Contacts proteins S5 and S12.

Its function is as follows. One of the primary rRNA binding proteins, it binds directly to 16S rRNA central domain where it helps coordinate assembly of the platform of the 30S subunit. The polypeptide is Small ribosomal subunit protein uS8 (Thioalkalivibrio sulfidiphilus (strain HL-EbGR7)).